The chain runs to 206 residues: Regulatory protein CysR (206 aa).

In terms of domain architecture, HTH crp-type spans Arg120–Glu196. The H-T-H motif DNA-binding region spans His156 to Gly175.

Its subcellular location is the cytoplasm. Functionally, probably regulates the expression of genes from the sulfate permease complex. The sequence is that of Regulatory protein CysR (cysR) from Synechococcus elongatus (strain ATCC 33912 / PCC 7942 / FACHB-805) (Anacystis nidulans R2).